The sequence spans 311 residues: Methionyl-tRNA formyltransferase (311 aa).

Serine 109–proline 112 is a (6S)-5,6,7,8-tetrahydrofolate binding site.

This sequence belongs to the Fmt family.

It carries out the reaction L-methionyl-tRNA(fMet) + (6R)-10-formyltetrahydrofolate = N-formyl-L-methionyl-tRNA(fMet) + (6S)-5,6,7,8-tetrahydrofolate + H(+). Functionally, attaches a formyl group to the free amino group of methionyl-tRNA(fMet). The formyl group appears to play a dual role in the initiator identity of N-formylmethionyl-tRNA by promoting its recognition by IF2 and preventing the misappropriation of this tRNA by the elongation apparatus. The polypeptide is Methionyl-tRNA formyltransferase (Kosmotoga olearia (strain ATCC BAA-1733 / DSM 21960 / TBF 19.5.1)).